The following is a 288-amino-acid chain: ATP synthase gamma chain (288 aa).

The protein belongs to the ATPase gamma chain family. In terms of assembly, F-type ATPases have 2 components, CF(1) - the catalytic core - and CF(0) - the membrane proton channel. CF(1) has five subunits: alpha(3), beta(3), gamma(1), delta(1), epsilon(1). CF(0) has three main subunits: a, b and c.

It is found in the cell inner membrane. In terms of biological role, produces ATP from ADP in the presence of a proton gradient across the membrane. The gamma chain is believed to be important in regulating ATPase activity and the flow of protons through the CF(0) complex. This Aliivibrio fischeri (strain ATCC 700601 / ES114) (Vibrio fischeri) protein is ATP synthase gamma chain.